The primary structure comprises 368 residues: Glutamate 5-kinase (368 aa).

Lysine 12 contributes to the ATP binding site. Positions 52, 139, and 151 each coordinate substrate. ATP contacts are provided by residues 171 to 172 and 213 to 219; these read SD and TGGMKTK. One can recognise a PUA domain in the interval 277–354; it reads KGALIIDDGA…KEIEKLLGYI (78 aa).

This sequence belongs to the glutamate 5-kinase family.

Its subcellular location is the cytoplasm. The catalysed reaction is L-glutamate + ATP = L-glutamyl 5-phosphate + ADP. The protein operates within amino-acid biosynthesis; L-proline biosynthesis; L-glutamate 5-semialdehyde from L-glutamate: step 1/2. In terms of biological role, catalyzes the transfer of a phosphate group to glutamate to form L-glutamate 5-phosphate. The sequence is that of Glutamate 5-kinase from Pelagibacter ubique (strain HTCC1062).